We begin with the raw amino-acid sequence, 96 residues long: uncharacterized protein (96 aa).

The N-terminal stretch at 1 to 19 (MKFLSALLLIVLLISVVFG) is a signal peptide. N-linked (GlcNAc...) asparagine glycosylation is present at N20. Positions 27-46 (AWATTTTGGTTGSQTSPATH) are enriched in low complexity. The disordered stretch occupies residues 27-58 (AWATTTTGGTTGSQTSPATHGGHGGNGGNGHS). Positions 47–56 (GGHGGNGGNG) are enriched in gly residues.

It is found in the secreted. This is an uncharacterized protein from Dictyostelium discoideum (Social amoeba).